The following is a 317-amino-acid chain: Peroxisome biogenesis protein 7 (317 aa).

WD repeat units lie at residues 58–98 (DTAD…PSNP), 104–144 (EHAR…SVRT), 147–187 (EHAY…STMI), 190–230 (AHDF…VPLA), 234–274 (GHGY…ALVG), and 278–317 (HHTE…PRAS).

This sequence belongs to the WD repeat peroxin-7 family. Interacts with PEX5; interaction only takes place when PEX7 is associated with cargo proteins. Interacts with PEX13 (via N-terminus) and PEX12 (via C-terminus), but not with PEX14. In terms of tissue distribution, expressed in siliques and leaves, but barely detectable in flowers, stems and roots.

Its subcellular location is the cytoplasm. The protein localises to the cytosol. The protein resides in the peroxisome matrix. Receptor required for the peroxisomal import of proteins containing a C-terminal PTS2-type peroxisomal targeting signal. Specifically binds to cargo proteins containing a PTS2 peroxisomal targeting signal in the cytosol. Cargo protein-binding triggers interaction with PEX5 and formation of a ternary complex composed of PEX5 and PEX7 along with PTS2-containing cargo proteins, which is tranlocated into peroxisomes by passing through the PEX13-PEX14 docking complex. This chain is Peroxisome biogenesis protein 7 (PEX7), found in Arabidopsis thaliana (Mouse-ear cress).